A 202-amino-acid chain; its full sequence is LexA repressor 2 (202 aa).

Positions 28–48 (LADIATRFGFASRSVARKHIT) form a DNA-binding region, H-T-H motif. Residues S123 and K160 each act as for autocatalytic cleavage activity in the active site.

It belongs to the peptidase S24 family. Homodimer.

It catalyses the reaction Hydrolysis of Ala-|-Gly bond in repressor LexA.. Functionally, represses a number of genes involved in the response to DNA damage (SOS response), including recA and lexA. In the presence of single-stranded DNA, RecA interacts with LexA causing an autocatalytic cleavage which disrupts the DNA-binding part of LexA, leading to derepression of the SOS regulon and eventually DNA repair. This chain is LexA repressor 2, found in Pseudomonas putida (strain ATCC 47054 / DSM 6125 / CFBP 8728 / NCIMB 11950 / KT2440).